Reading from the N-terminus, the 380-residue chain is Dual-specificity RNA methyltransferase RlmN (380 aa).

Glutamate 94 functions as the Proton acceptor in the catalytic mechanism. One can recognise a Radical SAM core domain in the interval 100–339; that stretch reads DGDRATLCVS…VTVRKTRGDD (240 aa). Cysteine 107 and cysteine 344 form a disulfide bridge. The [4Fe-4S] cluster site is built by cysteine 114, cysteine 118, and cysteine 121. Residues 168 to 169, serine 200, 222 to 224, and asparagine 301 contribute to the S-adenosyl-L-methionine site; these read GE and SLH. Cysteine 344 functions as the S-methylcysteine intermediate in the catalytic mechanism.

The protein belongs to the radical SAM superfamily. RlmN family. Requires [4Fe-4S] cluster as cofactor.

It is found in the cytoplasm. The catalysed reaction is adenosine(2503) in 23S rRNA + 2 reduced [2Fe-2S]-[ferredoxin] + 2 S-adenosyl-L-methionine = 2-methyladenosine(2503) in 23S rRNA + 5'-deoxyadenosine + L-methionine + 2 oxidized [2Fe-2S]-[ferredoxin] + S-adenosyl-L-homocysteine. It catalyses the reaction adenosine(37) in tRNA + 2 reduced [2Fe-2S]-[ferredoxin] + 2 S-adenosyl-L-methionine = 2-methyladenosine(37) in tRNA + 5'-deoxyadenosine + L-methionine + 2 oxidized [2Fe-2S]-[ferredoxin] + S-adenosyl-L-homocysteine. Its function is as follows. Specifically methylates position 2 of adenine 2503 in 23S rRNA and position 2 of adenine 37 in tRNAs. m2A2503 modification seems to play a crucial role in the proofreading step occurring at the peptidyl transferase center and thus would serve to optimize ribosomal fidelity. This is Dual-specificity RNA methyltransferase RlmN from Vibrio atlanticus (strain LGP32) (Vibrio splendidus (strain Mel32)).